We begin with the raw amino-acid sequence, 308 residues long: Electron transfer flavoprotein subunit alpha (308 aa).

An FAD-binding site is contributed by 252-280; sequence LYVAVGISGAIQHLAGMKDSKVIVAINKD.

Belongs to the ETF alpha-subunit/FixB family. Heterodimer of an alpha and a beta subunit. Requires FAD as cofactor.

Its function is as follows. The electron transfer flavoprotein serves as a specific electron acceptor for other dehydrogenases. It transfers the electrons to the main respiratory chain via ETF-ubiquinone oxidoreductase (ETF dehydrogenase). The polypeptide is Electron transfer flavoprotein subunit alpha (etfA) (Paracoccus denitrificans).